The chain runs to 118 residues: UPF0329 protein ECU03_0030/ECU05_0040/ECU06_0010/ECU06_1710/ECU11_0010 (118 aa).

Belongs to the UPF0329 family.

The protein is UPF0329 protein ECU03_0030/ECU05_0040/ECU06_0010/ECU06_1710/ECU11_0010 of Encephalitozoon cuniculi (strain GB-M1) (Microsporidian parasite).